A 310-amino-acid chain; its full sequence is D-alanyl-D-alanine endopeptidase (310 aa).

The first 23 residues, 1-23 (MRNRLLSLVTLFLSLSVATAVSA), serve as a signal peptide directing secretion. Serine 66 functions as the Acyl-ester intermediate in the catalytic mechanism. Catalysis depends on lysine 69, which acts as the Proton acceptor. Serine 123 is an active-site residue. Residue lysine 230 coordinates substrate.

This sequence belongs to the peptidase S11 family.

Its subcellular location is the periplasm. Cell wall formation. This is D-alanyl-D-alanine endopeptidase (pbpG) from Pseudomonas aeruginosa (strain ATCC 15692 / DSM 22644 / CIP 104116 / JCM 14847 / LMG 12228 / 1C / PRS 101 / PAO1).